The sequence spans 130 residues: Small ribosomal subunit protein uS8 (130 aa).

This sequence belongs to the universal ribosomal protein uS8 family. As to quaternary structure, part of the 30S ribosomal subunit. Contacts proteins S5 and S12.

Functionally, one of the primary rRNA binding proteins, it binds directly to 16S rRNA central domain where it helps coordinate assembly of the platform of the 30S subunit. The polypeptide is Small ribosomal subunit protein uS8 (Marinobacter nauticus (strain ATCC 700491 / DSM 11845 / VT8) (Marinobacter aquaeolei)).